We begin with the raw amino-acid sequence, 111 residues long: MIPGEYRLREEPIVCNRQKSATKLTVVNRGDRPVQVGSHFHFFEVNSFLEFDRQAAYGKHLNIPAGTAVRFEPGDAKQVELVPFSGERRVYGLNNMVNGPLDGNGKGGVRE.

It belongs to the urease beta subunit family. Heterotrimer of UreA (gamma), UreB (beta) and UreC (alpha) subunits. Three heterotrimers associate to form the active enzyme.

Its subcellular location is the cytoplasm. It catalyses the reaction urea + 2 H2O + H(+) = hydrogencarbonate + 2 NH4(+). The protein operates within nitrogen metabolism; urea degradation; CO(2) and NH(3) from urea (urease route): step 1/1. In Geobacillus kaustophilus (strain HTA426), this protein is Urease subunit beta.